Reading from the N-terminus, the 524-residue chain is DEAD-box ATP-dependent RNA helicase CshA (524 aa).

The short motif at 1 to 29 (MKFNELNLSADLLAEIEKAGFVEASPIQE) is the Q motif element. The region spanning 32–202 (IPLALEGKDV…VQFMKAPEHV (171 aa)) is the Helicase ATP-binding domain. 45 to 52 (AQTGTGKT) is a binding site for ATP. Positions 150–153 (DEAD) match the DEAD box motif. The Helicase C-terminal domain maps to 213 to 373 (LVDQYYIRVK…GLKPASVEES (161 aa)). The tract at residues 440–524 (EKPLPFKPSG…GFVIRNKGDK (85 aa)) is disordered. Over residues 463-498 (RRGDDRRERDRRGNGRRDEFKKGSRGNDRFDKEKRY) the composition is skewed to basic and acidic residues.

The protein belongs to the DEAD box helicase family. CshA subfamily. Oligomerizes, may be a member of the RNA degradosome.

It localises to the cytoplasm. The catalysed reaction is ATP + H2O = ADP + phosphate + H(+). Functionally, DEAD-box RNA helicase possibly involved in RNA degradation. Unwinds dsRNA in both 5'- and 3'-directions, has RNA-dependent ATPase activity. In Streptococcus pneumoniae serotype 4 (strain ATCC BAA-334 / TIGR4), this protein is DEAD-box ATP-dependent RNA helicase CshA.